The primary structure comprises 27 residues: CKPPGSPCRVSSYNCCSSCKSYNKKCG.

Intrachain disulfides connect C1–C16, C8–C19, and C15–C26. 2 positions are modified to 4-hydroxyproline: P4 and P7.

This sequence belongs to the conotoxin O1 superfamily. Expressed by the venom duct.

It localises to the secreted. Its function is as follows. Omega-conotoxins act at presynaptic membranes, they bind and block voltage-gated calcium channels (Cav). The polypeptide is Omega-conotoxin RVIA (Conus radiatus (Rayed cone)).